The chain runs to 89 residues: Bombyxin A-2 (89 aa).

The first 19 residues, 1-19 (MKILLAIALMLSTVMWVST), serve as a signal peptide directing secretion. Gln20 is subject to Pyrrolidone carboxylic acid. 3 cysteine pairs are disulfide-bonded: Cys29–Cys76, Cys41–Cys89, and Cys75–Cys80. Positions 50–68 (SDAQFASYGSAWLMPYSAG) are cleaved as a propeptide — c peptide like.

It belongs to the insulin family. In terms of assembly, heterodimer of a B chain and an A chain linked by two disulfide bonds.

It is found in the secreted. Its function is as follows. Brain peptide responsible for activation of prothoracic glands to produce ecdysone in insects. This is Bombyxin A-2 (BBXA2) from Bombyx mori (Silk moth).